A 380-amino-acid polypeptide reads, in one-letter code: Cytochrome b (380 aa).

A run of 4 helical transmembrane segments spans residues 34–54, 78–99, 114–134, and 179–199; these read FGSL…LLAM, WLIR…YLHI, WNIG…GYVL, and FFAL…VHLT. Heme b is bound by residues His-84 and His-98. His-183 and His-197 together coordinate heme b. His-202 contributes to the a ubiquinone binding site. Transmembrane regions (helical) follow at residues 227 to 247, 289 to 309, 321 to 341, and 348 to 368; these read IKDM…ALFS, LGGV…PLLH, LLPF…WVGS, and FIII…VLFP.

This sequence belongs to the cytochrome b family. The cytochrome bc1 complex contains 11 subunits: 3 respiratory subunits (MT-CYB, CYC1 and UQCRFS1), 2 core proteins (UQCRC1 and UQCRC2) and 6 low-molecular weight proteins (UQCRH/QCR6, UQCRB/QCR7, UQCRQ/QCR8, UQCR10/QCR9, UQCR11/QCR10 and a cleavage product of UQCRFS1). This cytochrome bc1 complex then forms a dimer. The cofactor is heme b.

It is found in the mitochondrion inner membrane. Functionally, component of the ubiquinol-cytochrome c reductase complex (complex III or cytochrome b-c1 complex) that is part of the mitochondrial respiratory chain. The b-c1 complex mediates electron transfer from ubiquinol to cytochrome c. Contributes to the generation of a proton gradient across the mitochondrial membrane that is then used for ATP synthesis. This Gymnorhina tibicen (Australian magpie) protein is Cytochrome b (MT-CYB).